Here is a 65-residue protein sequence, read N- to C-terminus: MPKMKTNRAAAKRFKRTGTGKFMRARANKSHILTKKSPQRKRRLRQGTAVDAINVRALEHMLPYL.

The protein belongs to the bacterial ribosomal protein bL35 family.

The protein is Large ribosomal subunit protein bL35 of Syntrophobacter fumaroxidans (strain DSM 10017 / MPOB).